The primary structure comprises 487 residues: Glutamyl-tRNA(Gln) amidotransferase subunit A (487 aa).

Residues Lys82 and Ser157 each act as charge relay system in the active site. Ser181 acts as the Acyl-ester intermediate in catalysis.

This sequence belongs to the amidase family. GatA subfamily. Heterotrimer of A, B and C subunits.

The enzyme catalyses L-glutamyl-tRNA(Gln) + L-glutamine + ATP + H2O = L-glutaminyl-tRNA(Gln) + L-glutamate + ADP + phosphate + H(+). Its function is as follows. Allows the formation of correctly charged Gln-tRNA(Gln) through the transamidation of misacylated Glu-tRNA(Gln) in organisms which lack glutaminyl-tRNA synthetase. The reaction takes place in the presence of glutamine and ATP through an activated gamma-phospho-Glu-tRNA(Gln). The chain is Glutamyl-tRNA(Gln) amidotransferase subunit A from Fusobacterium nucleatum subsp. nucleatum (strain ATCC 25586 / DSM 15643 / BCRC 10681 / CIP 101130 / JCM 8532 / KCTC 2640 / LMG 13131 / VPI 4355).